The primary structure comprises 871 residues: MDQHHGARGGAPIRRPRRSIESRSHPFRATGNTQRTYSTPRLSYRDGLSGRTASRDPQEQASNQDESSNPSTSNAQQSTSFWGYLRRVFSDDVPAQPQAPRPRADFAPPAGEESSSEEEEEEGPAQAPLDEEDQLMYADQYSVGDSSDENDEEEDPRLGSDYPTSAESSEYHDHGEMVAGAGAESESETDIDAEEEEEDDEDDEDDMEVIRDESYRLPRTWLDKSIRLMDEALAQSSELSKAITKSTRSLYDSQFAPGGRGYTQTATPSRRLVQLSRAGMYDSDKIVMTGDYMEVDDDPDSAYQLWVRAIRHPLAMNPSWEETISNHTNPSFSTDIDYDIDELIEKNLARTPPVFEGLLDSAEFFYKLPMLYTYATITQDEAYEERLAWSNTQALHGHEQSSWQALLVYYSRGGMYVSPTQEPRGIWRRALKQAMALQLKMCVLGLSDVVTKQNATHHHTAVTFLVDALLRTARNCYLASRLLVFAWERRRETGAKRPAEPLIALSGVTLLQPLPPEVSELLEQRTFDIGLRTPNSAVFRAFFGSLVYWAELRLALRDPASINCRYVGFHLQTSEIYLLARAHSASPGYTKEELVAMEAILTLATLMLEVALQWVHVACAQLLSENDTIKAFRRVSASIPHALAPLGSIRLHDAEFEVLSNPDVMVARDETALSQALFLGYFSVRTALTACMRDYSHEADGGSKETVTGVFLGVGLILQRLAGHLNFLLNCLAGAALYGGQKINIHSLTLPRYSLLADVMAPMLQRQSLVDFWRARDNMLEDLEITPRPGPPTQGKRVVVEMPLPSDDLPDMTPGASVNNGAGLGRMVDMAKQLQHYRETIIGEEATSSVGKRGLIRAGVGVAALRGRRRK.

Positions 1-212 (MDQHHGARGG…DEDDMEVIRD (212 aa)) are disordered. Positions 13–33 (IRRPRRSIESRSHPFRATGNT) match the Nuclear localization signal motif. 2 stretches are compositionally biased toward polar residues: residues 30 to 41 (TGNTQRTYSTPR) and 59 to 81 (EQAS…STSF). Acidic residues-rich tracts occupy residues 114 to 134 (SSSE…EEDQ), 146 to 155 (SSDENDEEED), and 185 to 207 (SESE…EDDM).

It belongs to the alphaherpesvirinae HHV-1 UL47 family. In terms of assembly, interacts with US3 kinase. Interacts with UL31 and UL34; these interactions seem important for efficient virion nuclear egress. Interacts with UL41/VHS. Post-translationally, phosphorylated by US3. This phosphorylation is required for proper nuclear localization.

It is found in the virion tegument. The protein localises to the host nucleus. The protein resides in the host cytoplasm. Tegument protein that can bind to various RNA transcripts. Plays a role in the attenuation of selective viral and cellular mRNA degradation by modulating the activity of host shutoff RNase UL41/VHS. Also plays a role in the primary envelopment of virions in the perinuclear space, probably by interacting with two nuclear egress proteins UL31 and UL34. The sequence is that of Tegument protein UL47 homolog from Equine herpesvirus 1 (strain V592) (EHV-1).